The primary structure comprises 399 residues: Bifunctional enzyme IspD/IspF (399 aa).

The interval 1 to 235 (METWALILAA…MVEQPKTTVP (235 aa)) is 2-C-methyl-D-erythritol 4-phosphate cytidylyltransferase. Residues 236-399 (IVGYGYDVHK…IVIVTAIRIS (164 aa)) are 2-C-methyl-D-erythritol 2,4-cyclodiphosphate synthase. Residues D242 and H244 each coordinate a divalent metal cation. Residues 242–244 (DVH) and 275–276 (HS) contribute to the 4-CDP-2-C-methyl-D-erythritol 2-phosphate site. H283 is a binding site for a divalent metal cation. Residues 297-299 (DIG), 302-306 (FPDSD), 373-376 (TTEE), and F380 each bind 4-CDP-2-C-methyl-D-erythritol 2-phosphate.

This sequence in the N-terminal section; belongs to the IspD/TarI cytidylyltransferase family. IspD subfamily. The protein in the C-terminal section; belongs to the IspF family. A divalent metal cation serves as cofactor.

The enzyme catalyses 2-C-methyl-D-erythritol 4-phosphate + CTP + H(+) = 4-CDP-2-C-methyl-D-erythritol + diphosphate. It catalyses the reaction 4-CDP-2-C-methyl-D-erythritol 2-phosphate = 2-C-methyl-D-erythritol 2,4-cyclic diphosphate + CMP. It participates in isoprenoid biosynthesis; isopentenyl diphosphate biosynthesis via DXP pathway; isopentenyl diphosphate from 1-deoxy-D-xylulose 5-phosphate: step 2/6. Its pathway is isoprenoid biosynthesis; isopentenyl diphosphate biosynthesis via DXP pathway; isopentenyl diphosphate from 1-deoxy-D-xylulose 5-phosphate: step 4/6. In terms of biological role, bifunctional enzyme that catalyzes the formation of 4-diphosphocytidyl-2-C-methyl-D-erythritol from CTP and 2-C-methyl-D-erythritol 4-phosphate (MEP) (IspD), and catalyzes the conversion of 4-diphosphocytidyl-2-C-methyl-D-erythritol 2-phosphate (CDP-ME2P) to 2-C-methyl-D-erythritol 2,4-cyclodiphosphate (ME-CPP) with a corresponding release of cytidine 5-monophosphate (CMP) (IspF). This is Bifunctional enzyme IspD/IspF from Lawsonia intracellularis (strain PHE/MN1-00).